The following is a 222-amino-acid chain: Putative thymidylate synthase (222 aa).

Cysteine 146 is a catalytic residue.

The protein belongs to the thymidylate synthase family. Archaeal-type ThyA subfamily. Monomer.

It is found in the cytoplasm. It functions in the pathway pyrimidine metabolism; dTTP biosynthesis. May catalyze the biosynthesis of dTMP using an unknown cosubstrate. This chain is Putative thymidylate synthase, found in Methanothermobacter thermautotrophicus (strain ATCC 29096 / DSM 1053 / JCM 10044 / NBRC 100330 / Delta H) (Methanobacterium thermoautotrophicum).